Reading from the N-terminus, the 455-residue chain is SVGFKAGVKDYKLTYYTPDNQTKDTDILAAFRVTPQPGVPPEEAGAAVAAESSTGTWTTVWTDGLTSLDRYKGRCYHIEPVAGEENQFIAYVAYPLDLFEEGSVTNMFTSIVGNVFGFKALRALRLEDLRIPNAYVKTFQGPPHGIQVERDKLNKYGRPLLGCTIKPKLGLSAKNYGRAVYECLRGGLDFTKDDENVNSQPFMRWRDRFLFCAEALYKAQAETGEIKGHYLNATAGTCEEMIKRAVFARELGVPIVMHDYLTGGFTANTSLAHYCRDNGLLLHIHRAMHAVIDRQKNHGMHFRVLAKALRLSGGDHIHSGTVVGKLEGEREITLGFVDLLRDDFVEKDRSRGIYFTQDWVSLPGVLPVASGGIHVWHMPALTEIFGDDSVLQFGGGTLGHPWGNAPGAVANRVALEACVQARNEGRDLASEGNQIIREASKWSPELAAACEVWKE.

N6,N6,N6-trimethyllysine is present on lysine 5. Residues asparagine 114 and threonine 164 each coordinate substrate. Lysine 166 acts as the Proton acceptor in catalysis. Residue lysine 168 participates in substrate binding. The Mg(2+) site is built by lysine 192, aspartate 194, and glutamate 195. Position 192 is an N6-carboxylysine (lysine 192). Histidine 285 functions as the Proton acceptor in the catalytic mechanism. Residues arginine 286, histidine 318, and serine 370 each contribute to the substrate site.

It belongs to the RuBisCO large chain family. Type I subfamily. Heterohexadecamer of 8 large chains and 8 small chains; disulfide-linked. The disulfide link is formed within the large subunit homodimers. Mg(2+) is required as a cofactor. The disulfide bond which can form in the large chain dimeric partners within the hexadecamer appears to be associated with oxidative stress and protein turnover.

Its subcellular location is the plastid. The protein localises to the chloroplast. It carries out the reaction 2 (2R)-3-phosphoglycerate + 2 H(+) = D-ribulose 1,5-bisphosphate + CO2 + H2O. The catalysed reaction is D-ribulose 1,5-bisphosphate + O2 = 2-phosphoglycolate + (2R)-3-phosphoglycerate + 2 H(+). Its function is as follows. RuBisCO catalyzes two reactions: the carboxylation of D-ribulose 1,5-bisphosphate, the primary event in carbon dioxide fixation, as well as the oxidative fragmentation of the pentose substrate in the photorespiration process. Both reactions occur simultaneously and in competition at the same active site. The protein is Ribulose bisphosphate carboxylase large chain of Lupinus microcarpus var. densiflorus (Whitewhorl lupine).